We begin with the raw amino-acid sequence, 977 residues long: Synaptopodin 2-like protein (977 aa).

In terms of domain architecture, PDZ spans 6-88 (EVLVTLSGGA…QLVLTVQRLA (83 aa)). Disordered regions lie at residues 91–226 (GPVQ…GPLR), 317–352 (AGTG…QSDW), and 364–677 (AGSR…EDAL). A phosphoserine mark is found at S108 and S111. Pro residues predominate over residues 109–123 (PLSPEPPGAPVPQPL). T141 carries the post-translational modification Phosphothreonine. Phosphoserine is present on residues S143, S178, and S180. A compositionally biased stretch (pro residues) spans 183–192 (EPAPTIPGPP). A compositionally biased stretch (polar residues) spans 194 to 203 (QGDSRVSSPS). Positions 216–226 (EALLLPHGPLR) are enriched in low complexity. Residues S345, S350, S374, S381, and S384 each carry the phosphoserine modification. R386 is subject to Omega-N-methylarginine. Pro residues predominate over residues 436 to 450 (PPSPLPAPVASPRPF). 3 positions are modified to omega-N-methylarginine: R466, R469, and R479. The span at 510 to 525 (LSSQGPTPLPSFTSGV) shows a compositional bias: polar residues. Composition is skewed to low complexity over residues 530 to 545 (PVSG…GPVT) and 572 to 595 (SAAA…ARPE). Residues 596-607 (APAPGPGAPEPP) show a composition bias toward pro residues. A phosphoserine mark is found at S670 and S678. The segment at 697–802 (TLPHVTPKTP…PSLPPSWKYS (106 aa)) is disordered. Over residues 704–730 (KTPPPMAPKTPPPMTPKTPPPVAPKPP) the composition is skewed to pro residues. Residues T705 and T713 each carry the phosphothreonine modification. R757 is modified (omega-N-methylarginine). Pro residues predominate over residues 781 to 796 (GLGPRPRSPSPTPSLP). Phosphoserine is present on residues S788 and S790. T792 is subject to Phosphothreonine. An omega-N-methylarginine mark is found at R806, R826, and R889. S891 carries the post-translational modification Phosphoserine. 2 positions are modified to phosphothreonine: T892 and T898. Position 910 is an omega-N-methylarginine (R910). Position 921 is an asymmetric dimethylarginine; alternate (R921). R921 carries the post-translational modification Omega-N-methylarginine; alternate. The disordered stretch occupies residues 922-950 (TELASAPVPSPAPPPEAPRGLGASPSSCG). Pro residues predominate over residues 929–938 (VPSPAPPPEA). R955 and R957 each carry omega-N-methylarginine.

This sequence belongs to the synaptopodin family.

Its subcellular location is the cytoplasm. The protein resides in the cytoskeleton. Actin-associated protein that may play a role in modulating actin-based shape. The polypeptide is Synaptopodin 2-like protein (SYNPO2L) (Homo sapiens (Human)).